A 67-amino-acid chain; its full sequence is Ferredoxin FdxE (67 aa).

[3Fe-4S] cluster contacts are provided by cysteine 10, valine 11, glutamine 15, cysteine 16, and cysteine 54.

As to quaternary structure, interacts with the cytochrome P450 143 with high affinity (Kd=84 nM). [3Fe-4S] cluster serves as cofactor.

In terms of biological role, ferredoxin that is the redox partner of cytochrome CYP143, a cytochrome P450 encoded by an adjacent gene. The polypeptide is Ferredoxin FdxE (Mycobacterium tuberculosis (strain ATCC 25618 / H37Rv)).